Consider the following 453-residue polypeptide: Ribosome biogenesis protein YTM1 (453 aa).

Positions 19–102 (VKVRFFTNEE…ETVIDLQYTR (84 aa)) are ubiquitin-like (UBL) domain. Residues 112–453 (SFTNEDWISS…KKIDIYREAN (342 aa)) form a sufficient for interaction with ERB1 and association with 66S pre-ribosomes region. WD repeat units follow at residues 128–166 (GHGAVLASNMKLQESKILSGSYDGVVRTYNMSGEVESQY), 168–206 (GHSGPVKSVRWISPTRIVSAGNDHSLRLWKTKLAGVEEG), 218–257 (GHKGPVVDLAVDYKSNKIISAGNDSVVGVWSTNASDMSAV), 292–332 (GHGQ…CVDT), 334–373 (STGFSLLSILQLPNLHLVASGSSARHINLHDPRASSSTEQ), 380–420 (GHTN…AMYT), and 422–453 (GKGGKVFGVSWDPIGIVSGGEDKKIDIYREAN).

This sequence belongs to the WD repeat WDR12/YTM1 family. In terms of assembly, component of the NOP7 complex, composed of ERB1, NOP7 and YTM1. The complex is held together by ERB1, which interacts with NOP7 via its N-terminal domain and with YTM1 via a high-affinity interaction between the seven-bladed beta-propeller domains of the 2 proteins. The NOP7 complex associates with the 66S pre-ribosome. Interacts (via UBL domain) with MDN1 (via VWFA/MIDAS domain).

Its subcellular location is the nucleus. It localises to the nucleolus. It is found in the nucleoplasm. Functionally, component of the NOP7 complex, which is required for maturation of the 25S and 5.8S ribosomal RNAs and formation of the 60S ribosome. This chain is Ribosome biogenesis protein YTM1, found in Meyerozyma guilliermondii (strain ATCC 6260 / CBS 566 / DSM 6381 / JCM 1539 / NBRC 10279 / NRRL Y-324) (Yeast).